Consider the following 610-residue polypeptide: Probable galacturonosyltransferase 5 (610 aa).

Residues 1-6 are Cytoplasmic-facing; it reads MNQVRR. The chain crosses the membrane as a helical; Signal-anchor for type II membrane protein span at residues 7–27; sequence WQRILILSLLLLSVLAPIVFV. Residues 28–610 lie on the Lumenal side of the membrane; that stretch reads SNRLKSITSV…PHLQRCNIHD (583 aa). A compositionally biased stretch (polar residues) spans 86-101; the sequence is LSNSSDKSNDTVQSNE. Positions 86–170 are disordered; that stretch reads LSNSSDKSND…KNTRVQLERA (85 aa). N88 and N94 each carry an N-linked (GlcNAc...) asparagine glycan. A compositionally biased stretch (basic and acidic residues) spans 110–123; the sequence is EVDKGNNHKPKEEQ. The span at 124-135 shows a compositional bias: polar residues; it reads AVSQKTTVSSNA. Residues 139–170 show a composition bias toward basic and acidic residues; the sequence is ISARDIQLNHKTEFRPPSSKSEKNTRVQLERA. 4 N-linked (GlcNAc...) asparagine glycosylation sites follow: N196, N338, N401, and N475.

This sequence belongs to the glycosyltransferase 8 family. Expressed in roots, inflorescences, siliques, leaves and stems.

The protein localises to the golgi apparatus membrane. The protein operates within glycan metabolism; pectin biosynthesis. In terms of biological role, may be involved in pectin and/or xylans biosynthesis in cell walls. This is Probable galacturonosyltransferase 5 (GAUT5) from Arabidopsis thaliana (Mouse-ear cress).